Reading from the N-terminus, the 211-residue chain is Soluble inorganic pyrophosphatase PPA1 (211 aa).

Lys-61 and Arg-75 together coordinate substrate. The Proton donor role is filled by Tyr-83. Residue Tyr-87 coordinates substrate. Mg(2+)-binding residues include Asp-97, Asp-102, and Asp-134. Tyr-171 lines the substrate pocket.

This sequence belongs to the PPase family. The cofactor is Mg(2+).

The protein resides in the cytoplasm. The enzyme catalyses diphosphate + H2O = 2 phosphate + H(+). With respect to regulation, strongly inhibited by Ca(2+). Catalyzes the irreversible hydrolysis of pyrophosphate (PPi) to phosphate. This Solanum tuberosum (Potato) protein is Soluble inorganic pyrophosphatase PPA1.